We begin with the raw amino-acid sequence, 501 residues long: MAINAQEISALIKQQIENFQPDFDVTETGVVTYVGDGIARAHGLDNAMSGELLVFENGSYGMAQNLESNDVGIIILGDFTDIREGDTIRRTGKIMEVPVGEALIGRVVDPLGRPVDGLGEIATDKTRPVETPAPGVMQRKSVSEPLQTGLKAIDALVPIGRGQRELIIGDRQTGKTTIAIDAILNQKGQDMICIYVAIGQKESTVRTQVETLRQYGALDYTIVVTASASQPSPLLYLAPYAGVAMAEEFMYNGKHVLIVYDDLSKQAVAYRELSLLLRRPPGREAFPGDVFYLHSRLLERSAKVSDELGGGSITALPFIETQAGDISAYIATNVISITDGQIFLSDGLFNGGVRPAIDAGSSVSRVGGSAQIKAMKKVAGTLRIDLASYRELEAFTKFGSDLDAATQAKLNRGRRTVEVLKQPVHKPLPVEKQVVILYALTHGFLDSVPVDDILRFEEELFAYFDAHQEGIYETIRTTKDLPSEEVLDAAITEFVNQSSFK.

169–176 (GDRQTGKT) contributes to the ATP binding site.

This sequence belongs to the ATPase alpha/beta chains family. As to quaternary structure, F-type ATPases have 2 components, CF(1) - the catalytic core - and CF(0) - the membrane proton channel. CF(1) has five subunits: alpha(3), beta(3), gamma(1), delta(1), epsilon(1). CF(0) has three main subunits: a(1), b(2) and c(9-12). The alpha and beta chains form an alternating ring which encloses part of the gamma chain. CF(1) is attached to CF(0) by a central stalk formed by the gamma and epsilon chains, while a peripheral stalk is formed by the delta and b chains.

The protein resides in the cell membrane. The enzyme catalyses ATP + H2O + 4 H(+)(in) = ADP + phosphate + 5 H(+)(out). Functionally, produces ATP from ADP in the presence of a proton gradient across the membrane. The alpha chain is a regulatory subunit. The sequence is that of ATP synthase subunit alpha from Streptococcus gordonii (strain Challis / ATCC 35105 / BCRC 15272 / CH1 / DL1 / V288).